The sequence spans 239 residues: UDP-2,3-diacylglucosamine hydrolase (239 aa).

The Mn(2+) site is built by Asp-8, His-10, Asp-41, Asn-78, and His-113. 78–79 (NR) lines the substrate pocket. 5 residues coordinate substrate: Asp-121, Ser-159, Asn-163, Lys-166, and His-194. Mn(2+) is bound by residues His-194 and His-196.

This sequence belongs to the LpxH family. It depends on Mn(2+) as a cofactor.

It localises to the cell inner membrane. It catalyses the reaction UDP-2-N,3-O-bis[(3R)-3-hydroxytetradecanoyl]-alpha-D-glucosamine + H2O = 2-N,3-O-bis[(3R)-3-hydroxytetradecanoyl]-alpha-D-glucosaminyl 1-phosphate + UMP + 2 H(+). Its pathway is glycolipid biosynthesis; lipid IV(A) biosynthesis; lipid IV(A) from (3R)-3-hydroxytetradecanoyl-[acyl-carrier-protein] and UDP-N-acetyl-alpha-D-glucosamine: step 4/6. In terms of biological role, hydrolyzes the pyrophosphate bond of UDP-2,3-diacylglucosamine to yield 2,3-diacylglucosamine 1-phosphate (lipid X) and UMP by catalyzing the attack of water at the alpha-P atom. Involved in the biosynthesis of lipid A, a phosphorylated glycolipid that anchors the lipopolysaccharide to the outer membrane of the cell. This chain is UDP-2,3-diacylglucosamine hydrolase, found in Shewanella oneidensis (strain ATCC 700550 / JCM 31522 / CIP 106686 / LMG 19005 / NCIMB 14063 / MR-1).